A 405-amino-acid chain; its full sequence is Glucose-1-phosphate adenylyltransferase (405 aa).

Alpha-D-glucose 1-phosphate is bound by residues tyrosine 96, glycine 161, 176–177 (EK), and serine 194.

This sequence belongs to the bacterial/plant glucose-1-phosphate adenylyltransferase family. In terms of assembly, homotetramer.

The catalysed reaction is alpha-D-glucose 1-phosphate + ATP + H(+) = ADP-alpha-D-glucose + diphosphate. Its pathway is glycan biosynthesis; glycogen biosynthesis. Involved in the biosynthesis of ADP-glucose, a building block required for the elongation reactions to produce glycogen. Catalyzes the reaction between ATP and alpha-D-glucose 1-phosphate (G1P) to produce pyrophosphate and ADP-Glc. The protein is Glucose-1-phosphate adenylyltransferase of Aliivibrio fischeri (strain MJ11) (Vibrio fischeri).